The sequence spans 128 residues: Histone H2A type 1-H (128 aa).

The tract at residues 1-22 (MSGRGKQGGKARAKAKTRSSRA) is disordered. Residue serine 2 is modified to N-acetylserine. Residue serine 2 is modified to Phosphoserine; by RPS6KA5. Arginine 4 is modified (citrulline; alternate). Residue arginine 4 is modified to Symmetric dimethylarginine; by PRMT5; alternate. Position 6 is an N6-(2-hydroxyisobutyryl)lysine (lysine 6). A compositionally biased stretch (basic residues) spans 7 to 19 (QGGKARAKAKTRS). Lysine 10 carries the post-translational modification N6-(2-hydroxyisobutyryl)lysine; alternate. Lysine 10 and lysine 14 each carry N6-(beta-hydroxybutyryl)lysine; alternate. Lysine 10 carries the N6-lactoyllysine; alternate modification. Position 10 is an N6-succinyllysine; alternate (lysine 10). Residue lysine 14 forms a Glycyl lysine isopeptide (Lys-Gly) (interchain with G-Cter in ubiquitin); alternate linkage. Residue lysine 16 forms a Glycyl lysine isopeptide (Lys-Gly) (interchain with G-Cter in ubiquitin) linkage. An N6-(2-hydroxyisobutyryl)lysine; alternate modification is found at lysine 37. Lysine 37 carries the post-translational modification N6-(beta-hydroxybutyryl)lysine; alternate. Lysine 37 carries the N6-crotonyllysine; alternate modification. N6-(2-hydroxyisobutyryl)lysine occurs at positions 75 and 76. Lysine 96 is subject to N6-(2-hydroxyisobutyryl)lysine; alternate. Lysine 96 is modified (N6-(beta-hydroxybutyryl)lysine; alternate). Position 96 is an N6-succinyllysine; alternate (lysine 96). Lysine 96 is modified (N6-glutaryllysine; alternate). The residue at position 100 (lysine 100) is an N6-glutaryllysine. An N5-methylglutamine modification is found at glutamine 105. Lysine 119 carries the post-translational modification N6-(2-hydroxyisobutyryl)lysine; alternate. At lysine 119 the chain carries N6-(beta-hydroxybutyryl)lysine; alternate. An N6-crotonyllysine; alternate mark is found at lysine 119 and lysine 120. N6-glutaryllysine; alternate occurs at positions 119 and 120. A Glycyl lysine isopeptide (Lys-Gly) (interchain with G-Cter in ubiquitin); alternate cross-link involves residue lysine 120. Threonine 121 is modified (phosphothreonine; by DCAF1). Residue lysine 126 is modified to N6-crotonyllysine; alternate. Position 126 is an N6-glutaryllysine; alternate (lysine 126).

Belongs to the histone H2A family. In terms of assembly, the nucleosome is a histone octamer containing two molecules each of H2A, H2B, H3 and H4 assembled in one H3-H4 heterotetramer and two H2A-H2B heterodimers. The octamer wraps approximately 147 bp of DNA. Post-translationally, deiminated on Arg-4 in granulocytes upon calcium entry. In terms of processing, monoubiquitination of Lys-120 (H2AK119Ub) by RING1, TRIM37 and RNF2/RING2 complex gives a specific tag for epigenetic transcriptional repression and participates in X chromosome inactivation of female mammals. It is involved in the initiation of both imprinted and random X inactivation. Ubiquitinated H2A is enriched in inactive X chromosome chromatin. Ubiquitination of H2A functions downstream of methylation of 'Lys-27' of histone H3 (H3K27me). H2AK119Ub by RNF2/RING2 can also be induced by ultraviolet and may be involved in DNA repair. Monoubiquitination of Lys-120 (H2AK119Ub) by TRIM37 may promote transformation of cells in a number of breast cancers. Following DNA double-strand breaks (DSBs), it is ubiquitinated through 'Lys-63' linkage of ubiquitin moieties by the E2 ligase UBE2N and the E3 ligases RNF8 and RNF168, leading to the recruitment of repair proteins to sites of DNA damage. Ubiquitination at Lys-14 and Lys-16 (H2AK13Ub and H2AK15Ub, respectively) in response to DNA damage is initiated by RNF168 that mediates monoubiquitination at these 2 sites, and 'Lys-63'-linked ubiquitin are then conjugated to monoubiquitin; RNF8 is able to extend 'Lys-63'-linked ubiquitin chains in vitro. Deubiquitinated by USP51 at Lys-14 and Lys-16 (H2AK13Ub and H2AK15Ub, respectively) after damaged DNA is repaired. H2AK119Ub and ionizing radiation-induced 'Lys-63'-linked ubiquitination (H2AK13Ub and H2AK15Ub) are distinct events. Phosphorylation on Ser-2 (H2AS1ph) is enhanced during mitosis. Phosphorylation on Ser-2 by RPS6KA5/MSK1 directly represses transcription. Acetylation of H3 inhibits Ser-2 phosphorylation by RPS6KA5/MSK1. Phosphorylation at Thr-121 (H2AT120ph) by DCAF1 is present in the regulatory region of many tumor suppresor genes and down-regulates their transcription. Post-translationally, glutamine methylation at Gln-105 (H2AQ104me) by FBL is specifically dedicated to polymerase I. It is present at 35S ribosomal DNA locus and impairs binding of the FACT complex. In terms of processing, symmetric dimethylation on Arg-4 by the PRDM1/PRMT5 complex may play a crucial role in the germ-cell lineage. Crotonylation (Kcr) is specifically present in male germ cells and marks testis-specific genes in post-meiotic cells, including X-linked genes that escape sex chromosome inactivation in haploid cells. Crotonylation marks active promoters and enhancers and confers resistance to transcriptional repressors. It is also associated with post-meiotically activated genes on autosomes. Post-translationally, lactylated in macrophages by EP300/P300 by using lactoyl-CoA directly derived from endogenous or exogenous lactate, leading to stimulates gene transcription.

Its subcellular location is the nucleus. It localises to the chromosome. Core component of nucleosome. Nucleosomes wrap and compact DNA into chromatin, limiting DNA accessibility to the cellular machineries which require DNA as a template. Histones thereby play a central role in transcription regulation, DNA repair, DNA replication and chromosomal stability. DNA accessibility is regulated via a complex set of post-translational modifications of histones, also called histone code, and nucleosome remodeling. This chain is Histone H2A type 1-H, found in Homo sapiens (Human).